Consider the following 493-residue polypeptide: Alpha-amylase-related protein (493 aa).

Positions Met-1–Ala-19 are cleaved as a signal peptide. Gln-20 is subject to Pyrrolidone carboxylic acid. The cysteines at positions 47 and 103 are disulfide-linked. Positions 117, 168, and 177 each coordinate Ca(2+). Cysteines 156 and 170 form a disulfide. Arg-205 is a chloride binding site. Asp-207 functions as the Nucleophile in the catalytic mechanism. A Ca(2+)-binding site is contributed by His-211. The active-site Proton donor is Glu-244. 2 residues coordinate chloride: Asn-307 and Arg-342. 3 cysteine pairs are disulfide-bonded: Cys-375–Cys-381, Cys-417–Cys-440, and Cys-447–Cys-459.

It belongs to the glycosyl hydrolase 13 family. As to quaternary structure, monomer. Ca(2+) serves as cofactor. It depends on chloride as a cofactor.

The protein localises to the secreted. It carries out the reaction Endohydrolysis of (1-&gt;4)-alpha-D-glucosidic linkages in polysaccharides containing three or more (1-&gt;4)-alpha-linked D-glucose units.. This chain is Alpha-amylase-related protein (Amyrel), found in Drosophila ananassae (Fruit fly).